Consider the following 276-residue polypeptide: UPF0276 protein AM1_3026 (276 aa).

This sequence belongs to the UPF0276 family.

This chain is UPF0276 protein AM1_3026, found in Acaryochloris marina (strain MBIC 11017).